We begin with the raw amino-acid sequence, 277 residues long: Bifunctional protein FolD (277 aa).

NADP(+) contacts are provided by residues Gly156–Ser158, Ser183, and Ile224.

Belongs to the tetrahydrofolate dehydrogenase/cyclohydrolase family. Homodimer.

It carries out the reaction (6R)-5,10-methylene-5,6,7,8-tetrahydrofolate + NADP(+) = (6R)-5,10-methenyltetrahydrofolate + NADPH. The catalysed reaction is (6R)-5,10-methenyltetrahydrofolate + H2O = (6R)-10-formyltetrahydrofolate + H(+). It participates in one-carbon metabolism; tetrahydrofolate interconversion. Catalyzes the oxidation of 5,10-methylenetetrahydrofolate to 5,10-methenyltetrahydrofolate and then the hydrolysis of 5,10-methenyltetrahydrofolate to 10-formyltetrahydrofolate. This Kosmotoga olearia (strain ATCC BAA-1733 / DSM 21960 / TBF 19.5.1) protein is Bifunctional protein FolD.